Reading from the N-terminus, the 109-residue chain is Defensin-B5 (109 aa).

A signal peptide spans 1–20 (MRGLLPFLFLLSFFLSPIQA). The disordered stretch occupies residues 21–44 (QPEGREEELEETWSEDRDQAPPRV). Residues 21–70 (QPEGREEELEETWSEDRDQAPPRVVEESEVVGAENEAGLAAGRSYPWIIL) constitute a propeptide that is removed on maturation. Residues 34–44 (SEDRDQAPPRV) show a composition bias toward basic and acidic residues. 3 disulfides stabilise this stretch: cysteine 73-cysteine 101, cysteine 80-cysteine 95, and cysteine 85-cysteine 102. A propeptide spanning residues 107-109 (AVP) is cleaved from the precursor.

It belongs to the beta-defensin family. As to expression, highly expressed in kidney, and expressed at lower levels in testis.

Its subcellular location is the secreted. Functionally, has antimicrobial activity. This is Defensin-B5 from Ornithorhynchus anatinus (Duckbill platypus).